Reading from the N-terminus, the 184-residue chain is Threonylcarbamoyl-AMP synthase (184 aa).

The 184-residue stretch at 1–184 (MNNLLAVIEL…IFTQHIFRQG (184 aa)) folds into the YrdC-like domain.

Belongs to the SUA5 family. TsaC subfamily.

It is found in the cytoplasm. The enzyme catalyses L-threonine + hydrogencarbonate + ATP = L-threonylcarbamoyladenylate + diphosphate + H2O. Required for the formation of a threonylcarbamoyl group on adenosine at position 37 (t(6)A37) in tRNAs that read codons beginning with adenine. Catalyzes the conversion of L-threonine, HCO(3)(-)/CO(2) and ATP to give threonylcarbamoyl-AMP (TC-AMP) as the acyladenylate intermediate, with the release of diphosphate. This Haemophilus ducreyi (strain 35000HP / ATCC 700724) protein is Threonylcarbamoyl-AMP synthase.